A 592-amino-acid polypeptide reads, in one-letter code: Autophagy-related protein 22-1 (592 aa).

4 helical membrane passes run 31 to 51 (YGWAAEVFVVCAMGSFLPITL), 108 to 128 (TASFALYTFSLSVLVQAVIII), 143 to 163 (LLIVFAFIGSIATMLFLVVVP), and 167 to 187 (LLGGLLAIISNTCFGASFVLL). Asn213 carries N-linked (GlcNAc...) asparagine glycosylation. Helical transmembrane passes span 271–291 (IGIGYIGAVILQVISILVVVV), 301–321 (LVLFLIGLWWFVFTIPASLWL), 364–384 (IVIFLAAWFLLSDGIATVSGT), 398–418 (AALGLINVIVMLAGVFGAFSW), 433–453 (IIACIILFELIPLYGLLGFIP), 468–490 (MYPLGALYGLVMGGLSSYCRSFF), 502–524 (FYALYAITDKGSSIFGPAIVGAI), and 534–554 (AFVFLAVLIFVPLPLMLLVDV). A disordered region spans residues 572–592 (PQGSEYGAISDDQTTEDPIEE).

This sequence belongs to the ATG22 family.

It localises to the vacuole membrane. Functionally, vacuolar effluxer which mediate the efflux of amino acids resulting from autophagic degradation. The release of autophagic amino acids allows the maintenance of protein synthesis and viability during nitrogen starvation. This is Autophagy-related protein 22-1 (atg22-1) from Penicillium rubens (strain ATCC 28089 / DSM 1075 / NRRL 1951 / Wisconsin 54-1255) (Penicillium chrysogenum).